The primary structure comprises 205 residues: Probable nicotinate-nucleotide adenylyltransferase (205 aa).

Belongs to the NadD family.

It carries out the reaction nicotinate beta-D-ribonucleotide + ATP + H(+) = deamido-NAD(+) + diphosphate. It participates in cofactor biosynthesis; NAD(+) biosynthesis; deamido-NAD(+) from nicotinate D-ribonucleotide: step 1/1. In terms of biological role, catalyzes the reversible adenylation of nicotinate mononucleotide (NaMN) to nicotinic acid adenine dinucleotide (NaAD). This chain is Probable nicotinate-nucleotide adenylyltransferase, found in Nocardioides sp. (strain ATCC BAA-499 / JS614).